Consider the following 125-residue polypeptide: 14 kDa phosphohistidine phosphatase (125 aa).

Ala2 carries the post-translational modification N-acetylalanine. Residue Lys21 coordinates substrate. His53 (proton acceptor) is an active-site residue. 94 to 96 serves as a coordination point for substrate; that stretch reads SMA.

This sequence belongs to the janus family. Monomer. As to expression, expressed abundantly in heart and skeletal muscle.

The protein localises to the cytoplasm. The catalysed reaction is N(pros)-phospho-L-histidyl-[protein] + H2O = L-histidyl-[protein] + phosphate. The enzyme catalyses N(tele)-phospho-L-histidyl-[protein] + H2O = L-histidyl-[protein] + phosphate. Functionally, exhibits phosphohistidine phosphatase activity. The polypeptide is 14 kDa phosphohistidine phosphatase (PHPT1) (Homo sapiens (Human)).